A 543-amino-acid polypeptide reads, in one-letter code: Carboxypeptidase Y homolog A (543 aa).

The first 17 residues, 1 to 17 (MKVATSALLVGAVSASV), serve as a signal peptide directing secretion. Residues 18-128 (GPQQQVLKFP…KLENYSMRTK (111 aa)) constitute a propeptide that is removed on maturation. N-linked (GlcNAc...) asparagine glycans are attached at residues Asn122 and Asn213. Intrachain disulfides connect Cys182-Cys421, Cys316-Cys330, Cys340-Cys363, Cys347-Cys356, and Cys385-Cys391. Ser269 is a catalytic residue. Asp460 is a catalytic residue. Asn508 carries an N-linked (GlcNAc...) asparagine glycan. Residue His519 is part of the active site.

It belongs to the peptidase S10 family.

The protein resides in the vacuole. The enzyme catalyses Release of a C-terminal amino acid with broad specificity.. Vacuolar carboxypeptidase involved in degradation of small peptides. Digests preferentially peptides containing an aliphatic or hydrophobic residue in P1' position, as well as methionine, leucine or phenylalanine in P1 position of ester substrate. This chain is Carboxypeptidase Y homolog A (CPYA), found in Leptosphaeria maculans (strain JN3 / isolate v23.1.3 / race Av1-4-5-6-7-8) (Blackleg fungus).